The sequence spans 101 residues: Urease subunit beta (101 aa).

Belongs to the urease beta subunit family. Heterotrimer of UreA (gamma), UreB (beta) and UreC (alpha) subunits. Three heterotrimers associate to form the active enzyme.

The protein localises to the cytoplasm. The catalysed reaction is urea + 2 H2O + H(+) = hydrogencarbonate + 2 NH4(+). It participates in nitrogen metabolism; urea degradation; CO(2) and NH(3) from urea (urease route): step 1/1. This is Urease subunit beta from Rhodopseudomonas palustris (strain ATCC BAA-98 / CGA009).